The chain runs to 106 residues: uncharacterized protein (106 aa).

Residues 1–25 (MSVIKKNIPAIGLCICAFFIHSAVG) form the signal peptide.

To the N-terminal of the FimA/PapA family of fimbria proteins.

This is an uncharacterized protein from Salmonella typhi.